The sequence spans 342 residues: Anthranilate phosphoribosyltransferase (342 aa).

Residues Gly-84, 87–88 (GD), Thr-92, 94–97 (NITT), 112–120 (KHGNRSVSS), and Ser-124 contribute to the 5-phospho-alpha-D-ribose 1-diphosphate site. Gly-84 is an anthranilate binding site. Residue Thr-96 participates in Mg(2+) binding. Anthranilate is bound at residue Asn-115. Arg-170 is a binding site for anthranilate. Mg(2+)-binding residues include Asp-228 and Glu-229.

The protein belongs to the anthranilate phosphoribosyltransferase family. In terms of assembly, homodimer. Requires Mg(2+) as cofactor.

The enzyme catalyses N-(5-phospho-beta-D-ribosyl)anthranilate + diphosphate = 5-phospho-alpha-D-ribose 1-diphosphate + anthranilate. It functions in the pathway amino-acid biosynthesis; L-tryptophan biosynthesis; L-tryptophan from chorismate: step 2/5. Catalyzes the transfer of the phosphoribosyl group of 5-phosphorylribose-1-pyrophosphate (PRPP) to anthranilate to yield N-(5'-phosphoribosyl)-anthranilate (PRA). The protein is Anthranilate phosphoribosyltransferase of Corynebacterium efficiens (strain DSM 44549 / YS-314 / AJ 12310 / JCM 11189 / NBRC 100395).